Here is a 206-residue protein sequence, read N- to C-terminus: Ribosomal RNA large subunit methyltransferase E (206 aa).

S-adenosyl-L-methionine is bound by residues G63, W65, D83, D99, and D124. K164 acts as the Proton acceptor in catalysis.

The protein belongs to the class I-like SAM-binding methyltransferase superfamily. RNA methyltransferase RlmE family.

It localises to the cytoplasm. The enzyme catalyses uridine(2552) in 23S rRNA + S-adenosyl-L-methionine = 2'-O-methyluridine(2552) in 23S rRNA + S-adenosyl-L-homocysteine + H(+). Specifically methylates the uridine in position 2552 of 23S rRNA at the 2'-O position of the ribose in the fully assembled 50S ribosomal subunit. This Buchnera aphidicola subsp. Acyrthosiphon pisum (strain APS) (Acyrthosiphon pisum symbiotic bacterium) protein is Ribosomal RNA large subunit methyltransferase E.